Consider the following 282-residue polypeptide: Shikimate dehydrogenase (NADP(+)) (282 aa).

Shikimate contacts are provided by residues 15–17 (SKS) and Thr62. Lys66 functions as the Proton acceptor in the catalytic mechanism. Residues Asn87 and Asp103 each coordinate shikimate. NADP(+)-binding positions include 127-131 (GAGGA), 151-156 (NRTHTK), and Met220. Residue Tyr222 participates in shikimate binding. Gly244 lines the NADP(+) pocket.

This sequence belongs to the shikimate dehydrogenase family. In terms of assembly, homodimer.

The catalysed reaction is shikimate + NADP(+) = 3-dehydroshikimate + NADPH + H(+). The protein operates within metabolic intermediate biosynthesis; chorismate biosynthesis; chorismate from D-erythrose 4-phosphate and phosphoenolpyruvate: step 4/7. In terms of biological role, involved in the biosynthesis of the chorismate, which leads to the biosynthesis of aromatic amino acids. Catalyzes the reversible NADPH linked reduction of 3-dehydroshikimate (DHSA) to yield shikimate (SA). The polypeptide is Shikimate dehydrogenase (NADP(+)) (Shewanella baltica (strain OS223)).